Here is a 551-residue protein sequence, read N- to C-terminus: Nicotianamine aminotransferase B (551 aa).

The interval 24 to 127 (KSNGHGVAAA…GHAAAAAEEE (104 aa)) is disordered. Basic and acidic residues predominate over residues 86–96 (GHRESNGHAEA). The span at 111–123 (AANGESNGHAAAA) shows a compositional bias: low complexity. Position 379 is an N6-(pyridoxal phosphate)lysine (Lys379).

This sequence belongs to the class-I pyridoxal-phosphate-dependent aminotransferase family. It depends on pyridoxal 5'-phosphate as a cofactor. Expressed in roots, but not in leaves.

The catalysed reaction is nicotianamine + 2-oxoglutarate = 3''-deamino-3''-oxonicotianamine + L-glutamate. Functionally, involved in biosynthesis of mugineic acid family phytosiderophores. In Hordeum vulgare (Barley), this protein is Nicotianamine aminotransferase B.